The primary structure comprises 659 residues: MSVFLAVDHVHQVFDLPGGGQYIALKDVSLNIRPGEFISLIGHSGCGKSTLLNLIAGLAQPSSGGIILEGRQVTEPGPDRMVVFQNYSLLPWRTVRQNIALAVDSVLHDRNRTERRTIIEETIDLVGLRAAADKYPHEISGGMKQRVAIARGLAIRPKLLLLDEPFGALDALTRGNLQEQLMRICQEAGVTAVMVTHDVDEALLLSDRVVMLTNGPAAQIGQILEVDFPRPRQRLEMMETPHYYDLRNELINFLQQQRRAKRRAKAAAPAPAVAASQQKTVRLGFLPGNDCAPLAIAQELGLFQDLGLSVELQSFLTWEALEDSIRLGQLEGALMMAAQPLAMTMGLGGHRPFAIATPLTVSRNGGAIALSRRYLNAGVRSLEDLCQFLAATPQRLRLAIPDPIAMPALLLRYWLASAGLNPEQDVELVGMSPYEMVEALKAGDIDGFAAGEMRIALAVQAGAAYVLATDLDIWAGHPEKVLGLPEAWLQVNPETAIALCSALLKAGELCDDPRQRDRIVEVLQQPQYLGSAAGTVLQRYFDFGLGDEPTQILRFNQFHVDQANYPNPLEGTWLLTQLCRWGLTPLPKNRQELLDRVYRRDIYEAAIAAVGFPLITPSQRGFELFDAVPFDPDSPLRYLEQFEIKAPIQVAPIPLATSA.

One can recognise an ABC transporter domain in the interval 5–239 (LAVDHVHQVF…RPRQRLEMME (235 aa)). 42-49 (GHSGCGKS) is a binding site for ATP. The interval 255 to 278 (QQQRRAKRRAKAAAPAPAVAASQQ) is linker. The nrtA-like stretch occupies residues 279–659 (KTVRLGFLPG…VAPIPLATSA (381 aa)).

This sequence belongs to the ABC transporter superfamily. Nitrate/nitrite/cyanate uptake transporter (NitT) (TC 3.A.1.16) family. In terms of assembly, the complex is composed of two ATP-binding proteins (NrtC and NrtD), two transmembrane proteins (NrtB) and a solute-binding protein (NrtA).

The protein localises to the cell inner membrane. It catalyses the reaction nitrate(out) + ATP + H2O = nitrate(in) + ADP + phosphate + H(+). With respect to regulation, transport is inhibited by ammonium. The C-terminal domain of NrtC is involved in the ammonium-promoted inhibition of the nitrate/nitrite transporter. Its function is as follows. Part of the ABC transporter complex NrtABCD involved in nitrate uptake. The complex is probably also involved in nitrite transport. Probably responsible for energy coupling to the transport system. This is Nitrate import ATP-binding protein NrtC from Synechococcus elongatus (strain ATCC 33912 / PCC 7942 / FACHB-805) (Anacystis nidulans R2).